The primary structure comprises 505 residues: Putative pentatricopeptide repeat-containing protein At1g26500 (505 aa).

7 PPR repeats span residues 145–179, 180–210, 214–248, 249–279, 285–319, 320–350, and 351–385; these read NDKT…GYLY, NVET…LKEF, DEIT…GFDV, DIEA…MVSK, DGGF…GVYV, DNLT…VENP, and DISI…GCEP.

It belongs to the PPR family. P subfamily.

This Arabidopsis thaliana (Mouse-ear cress) protein is Putative pentatricopeptide repeat-containing protein At1g26500.